Here is a 702-residue protein sequence, read N- to C-terminus: 1,4-alpha-glucan-branching enzyme (702 aa).

The residue at position 2 (A2) is an N-acetylalanine. Residues 62–63 (NE) and 91–93 (WAP) contribute to the substrate site. (1,4-alpha-D-glucosyl)n is bound at residue W107. 118–121 (EYGK) lines the substrate pocket. K143 is a (1,4-alpha-D-glucosyl)n binding site. Y173 is subject to Phosphotyrosine. 333 to 336 (EVLR) is a substrate binding site. Residue D357 is the Nucleophile of the active site. E412 acts as the Proton donor in catalysis.

Belongs to the glycosyl hydrolase 13 family. GlgB subfamily. As to quaternary structure, monomer.

It catalyses the reaction Transfers a segment of a (1-&gt;4)-alpha-D-glucan chain to a primary hydroxy group in a similar glucan chain.. It participates in glycan biosynthesis; glycogen biosynthesis. Glycogen-branching enzyme participates in the glycogen biosynthetic process along with glycogenin and glycogen synthase. Generates alpha-1,6-glucosidic branches from alpha-1,4-linked glucose chains, to increase solubility of the glycogen polymer. The chain is 1,4-alpha-glucan-branching enzyme (Gbe1) from Mus musculus (Mouse).